Reading from the N-terminus, the 251-residue chain is Probable transcriptional regulatory protein MMAR_2098 (251 aa).

This sequence belongs to the TACO1 family.

It localises to the cytoplasm. The sequence is that of Probable transcriptional regulatory protein MMAR_2098 from Mycobacterium marinum (strain ATCC BAA-535 / M).